A 153-amino-acid polypeptide reads, in one-letter code: UPF0178 protein Ccel_2994 (153 aa).

The protein belongs to the UPF0178 family.

In Ruminiclostridium cellulolyticum (strain ATCC 35319 / DSM 5812 / JCM 6584 / H10) (Clostridium cellulolyticum), this protein is UPF0178 protein Ccel_2994.